The sequence spans 761 residues: Zinc finger protein 287 (761 aa).

In terms of domain architecture, SCAN box spans Arg49 to Leu131. Residues Glu134–His154 are disordered. The KRAB domain maps to Met170–Pro238. 14 C2H2-type zinc fingers span residues Tyr368–His390, Tyr396–His418, Tyr424–His446, Tyr452–His474, Tyr480–His502, Tyr508–His530, Tyr536–His558, Tyr564–His586, Tyr592–His614, Tyr620–His642, Phe648–His670, Tyr676–His698, Tyr704–His726, and Tyr732–His754.

The protein belongs to the krueppel C2H2-type zinc-finger protein family.

It localises to the nucleus. Its function is as follows. May be involved in transcriptional regulation. The protein is Zinc finger protein 287 of Pongo pygmaeus (Bornean orangutan).